Here is a 756-residue protein sequence, read N- to C-terminus: Multicystatin (756 aa).

8 Cystatin domains span residues 3–96 (IVGG…DDST), 97–191 (MPGG…DDIA), 192–285 (KLGG…DDSA), 286–380 (KTGG…DSAK), 381–474 (KLGG…DDSA), 475–568 (KLGG…DDSA), 569–662 (IIGG…DDSA), and 663–756 (KPGG…DATK). Short sequence motifs (secondary area of contact) lie at residues 48 to 52 (QIVAG), 142 to 146 (QVVAG), 237 to 241 (QVVAG), 331 to 335 (QLVSG), 426 to 430 (QVVAG), 520 to 524 (QLVAG), 614 to 618 (QLVAG), and 708 to 712 (QVVAG).

This sequence belongs to the cystatin family. Phytocystatin subfamily. As to expression, expressed abundantly in tuber and leaf.

Probably has a role in the plant's defense system. This chain is Multicystatin, found in Solanum tuberosum (Potato).